The following is a 342-amino-acid chain: Serpentine receptor class gamma-69 (342 aa).

7 helical membrane passes run 11-31 (MAGL…SVVV), 51-71 (SLLY…HFLI), 106-126 (PIAI…IVAA), 140-160 (LFVL…IPCK), 191-211 (IAAV…LIAL), 222-242 (AEIS…IYAF), and 269-289 (FAID…STTV).

The protein belongs to the nematode receptor-like protein srg family.

The protein localises to the membrane. The polypeptide is Serpentine receptor class gamma-69 (srg-69) (Caenorhabditis elegans).